Here is a 144-residue protein sequence, read N- to C-terminus: AP-4 complex subunit sigma-1 (144 aa).

The protein belongs to the adaptor complexes small subunit family. Adaptor protein complex 4 (AP-4) is a heterotetramer composed of two large adaptins (epsilon-type subunit AP4E1 and beta-type subunit AP4B1), a medium adaptin (mu-type subunit AP4M1) and a small adaptin (sigma-type AP4S1). As to expression, widely expressed.

The protein localises to the golgi apparatus. The protein resides in the trans-Golgi network membrane. In terms of biological role, component of the adaptor protein complex 4 (AP-4). Adaptor protein complexes are vesicle coat components involved both in vesicle formation and cargo selection. They control the vesicular transport of proteins in different trafficking pathways. AP-4 forms a non clathrin-associated coat on vesicles departing the trans-Golgi network (TGN) and may be involved in the targeting of proteins from the trans-Golgi network (TGN) to the endosomal-lysosomal system. It is also involved in protein sorting to the basolateral membrane in epithelial cells and the proper asymmetric localization of somatodendritic proteins in neurons. AP-4 is involved in the recognition and binding of tyrosine-based sorting signals found in the cytoplasmic part of cargos, but may also recognize other types of sorting signal. The polypeptide is AP-4 complex subunit sigma-1 (Homo sapiens (Human)).